The primary structure comprises 607 residues: Elongation factor 4 (607 aa).

Residues 11-193 (EKIRNFSIIA…QIVEKVPAPT (183 aa)) enclose the tr-type G domain. GTP-binding positions include 23–28 (DHGKST) and 140–143 (NKID).

Belongs to the TRAFAC class translation factor GTPase superfamily. Classic translation factor GTPase family. LepA subfamily.

It localises to the cell membrane. The catalysed reaction is GTP + H2O = GDP + phosphate + H(+). Its function is as follows. Required for accurate and efficient protein synthesis under certain stress conditions. May act as a fidelity factor of the translation reaction, by catalyzing a one-codon backward translocation of tRNAs on improperly translocated ribosomes. Back-translocation proceeds from a post-translocation (POST) complex to a pre-translocation (PRE) complex, thus giving elongation factor G a second chance to translocate the tRNAs correctly. Binds to ribosomes in a GTP-dependent manner. This Streptococcus gordonii (strain Challis / ATCC 35105 / BCRC 15272 / CH1 / DL1 / V288) protein is Elongation factor 4.